The primary structure comprises 71 residues: Putative membrane protein insertion efficiency factor (71 aa).

This sequence belongs to the UPF0161 family.

Its subcellular location is the cell inner membrane. Its function is as follows. Could be involved in insertion of integral membrane proteins into the membrane. The polypeptide is Putative membrane protein insertion efficiency factor (Nitrosospira multiformis (strain ATCC 25196 / NCIMB 11849 / C 71)).